The chain runs to 201 residues: Small ribosomal subunit protein uS5 (201 aa).

The tract at residues 1 to 28 (MAGPQRRGSGAGGGERRDRKGRDGGAGA) is disordered. The segment covering 14–23 (GERRDRKGRD) has biased composition (basic and acidic residues). In terms of domain architecture, S5 DRBM spans 34-97 (YVERVVAINR…EEAKKHFFKV (64 aa)).

Belongs to the universal ribosomal protein uS5 family. In terms of assembly, part of the 30S ribosomal subunit. Contacts proteins S4 and S8.

In terms of biological role, with S4 and S12 plays an important role in translational accuracy. Its function is as follows. Located at the back of the 30S subunit body where it stabilizes the conformation of the head with respect to the body. In Streptomyces coelicolor (strain ATCC BAA-471 / A3(2) / M145), this protein is Small ribosomal subunit protein uS5.